The primary structure comprises 123 residues: Large ribosomal subunit protein bL12 (123 aa).

This sequence belongs to the bacterial ribosomal protein bL12 family. In terms of assembly, homodimer. Part of the ribosomal stalk of the 50S ribosomal subunit. Forms a multimeric L10(L12)X complex, where L10 forms an elongated spine to which 2 to 4 L12 dimers bind in a sequential fashion. Binds GTP-bound translation factors.

Functionally, forms part of the ribosomal stalk which helps the ribosome interact with GTP-bound translation factors. Is thus essential for accurate translation. This Maricaulis maris (strain MCS10) (Caulobacter maris) protein is Large ribosomal subunit protein bL12.